A 279-amino-acid polypeptide reads, in one-letter code: Probable flavonol synthase 4 (279 aa).

Residues 1-25 (MEVERDQHKPPLSLQNNKIPSSQNF) are disordered. The span at 13–25 (SLQNNKIPSSQNF) shows a compositional bias: polar residues. One can recognise a Fe2OG dioxygenase domain in the interval 156–256 (GAGYLMKINY…RMSSVVHIKP (101 aa)). 164–166 (NYY) contacts 2-oxoglutarate. Fe cation is bound by residues His181, Asp183, and His237. 247-249 (RMS) provides a ligand contact to 2-oxoglutarate.

This sequence belongs to the iron/ascorbate-dependent oxidoreductase family. Requires Fe(2+) as cofactor.

It catalyses the reaction a (2R,3R)-dihydroflavonol + 2-oxoglutarate + O2 = a flavonol + succinate + CO2 + H2O. Its pathway is secondary metabolite biosynthesis; flavonoid biosynthesis. In Arabidopsis thaliana (Mouse-ear cress), this protein is Probable flavonol synthase 4 (FLS4).